Reading from the N-terminus, the 122-residue chain is Flagellar protein FliT (122 aa).

A required for homodimerization region spans residues 1 to 50 (MTSTVEFINRWQRIALLSQSLLELAQRGEWDLLLQQEVSYLQSIETVMEK). The interval 60-98 (IQDMVAGYIKQTLDNEQLLKGLLQQRLDELSSLIGQSTR) is fliD binding.

This sequence belongs to the FliT family. Homodimer. Interacts with FliD and FlhC.

The protein localises to the cytoplasm. The protein resides in the cytosol. Its function is as follows. Dual-function protein that regulates the transcription of class 2 flagellar operons and that also acts as an export chaperone for the filament-capping protein FliD. As a transcriptional regulator, acts as an anti-FlhDC factor; it directly binds FlhC, thus inhibiting the binding of the FlhC/FlhD complex to class 2 promoters, resulting in decreased expression of class 2 flagellar operons. As a chaperone, effects FliD transition to the membrane by preventing its premature polymerization, and by directing it to the export apparatus. This is Flagellar protein FliT from Salmonella gallinarum (strain 287/91 / NCTC 13346).